We begin with the raw amino-acid sequence, 220 residues long: Cysteine-rich venom protein VAR5 (220 aa).

A signal peptide spans 1–22; it reads MILLKLYLTLAAILCQSRGTTS. One can recognise an SCP domain in the interval 41-169; it reads NKHNDLRRTV…PLKYFLVCQY (129 aa). 5 disulfides stabilise this stretch: C77–C156, C95–C170, C151–C167, C189–C196, and C192–C201. Positions 205–220 constitute a ShKT domain; sequence CEHSNQYINCPDLTKQ.

Belongs to the CRISP family. In terms of processing, contains 8 disulfide bonds. In terms of tissue distribution, expressed by the venom gland.

The protein resides in the secreted. Functionally, blocks ryanodine receptors, and potassium channels. In Varanus acanthurus (Ridge-tailed monitor), this protein is Cysteine-rich venom protein VAR5.